The sequence spans 154 residues: Egg-lysin (154 aa).

Residues 1-18 form the signal peptide; the sequence is MKLFVLCIFAMMATLAMS.

In terms of assembly, homodimer. In terms of tissue distribution, sperm.

Its function is as follows. Dissolves the egg vitelline layer nonenzymatically during fertilization. It creates a hole of about 3 mu-m in diameter through which the sperm pass. The polypeptide is Egg-lysin (Haliotis kamtschatkana (Pinto abalone)).